The sequence spans 306 residues: Ornithine carbamoyltransferase (306 aa).

Carbamoyl phosphate contacts are provided by residues 46 to 49 (STRT), Gln-73, Arg-97, and 124 to 127 (HPTQ). Residues Asn-156, Asp-220, and 224–225 (SM) each bind L-ornithine. Residues 260–261 (CL) and Arg-288 contribute to the carbamoyl phosphate site.

The protein belongs to the aspartate/ornithine carbamoyltransferase superfamily. OTCase family.

It localises to the cytoplasm. It carries out the reaction carbamoyl phosphate + L-ornithine = L-citrulline + phosphate + H(+). Its pathway is amino-acid degradation; L-arginine degradation via ADI pathway; carbamoyl phosphate from L-arginine: step 2/2. Reversibly catalyzes the transfer of the carbamoyl group from carbamoyl phosphate (CP) to the N(epsilon) atom of ornithine (ORN) to produce L-citrulline. The sequence is that of Ornithine carbamoyltransferase from Campylobacter jejuni subsp. doylei (strain ATCC BAA-1458 / RM4099 / 269.97).